Consider the following 287-residue polypeptide: MASGREIKSKIKSVQNTRKVTRALEMVSASKIRKAQEQMKISRPYAQAMKQMTGHLAQANTDYLHPFLIAHKQVKRIGYIVISSDRGLAGGLNNNLFRKMLGEMRQWQDKGAEVDIVTIGQKASVFFRRIKVNILGSVTHLGDTPRLEQLIGVIKVMLDAYTEEKLDRVYLVYNRFINTMVQKASFDQLLPLLAAKDKVAHHDWDYLYEPDAATVLEHVMRRYIESLVYQAMLENIASEHAARMVAMKAASDNANKLIGTLQLVYNKARQAAITQEISEIVGGAAAV.

The protein belongs to the ATPase gamma chain family. As to quaternary structure, F-type ATPases have 2 components, CF(1) - the catalytic core - and CF(0) - the membrane proton channel. CF(1) has five subunits: alpha(3), beta(3), gamma(1), delta(1), epsilon(1). CF(0) has three main subunits: a, b and c.

Its subcellular location is the cell inner membrane. Produces ATP from ADP in the presence of a proton gradient across the membrane. The gamma chain is believed to be important in regulating ATPase activity and the flow of protons through the CF(0) complex. This Xylella fastidiosa (strain 9a5c) protein is ATP synthase gamma chain.